A 709-amino-acid polypeptide reads, in one-letter code: MATCADILRSEFPEIDGQVFDYVTGVLHSGSADFESVDDLVEAVGELLQEVSGDSKDDAGIRAVCQRMYNTLRLAEPQNQGNNQVLLDAPIQLSKIMENYDCDTKLPGLLKREQSSTVNAKKLEKAEARLKAKQEKRSEKETLKTSSPLVLEEASASQAGSRKESRLESSGKNKSYDVRIENFDVSFGDRVLLAGADVNLAWGRRYGLVGRNGLGKTTLLKMLATRSLRVPAHISLLHVEQEVAGDDTPALQSVLESDTIREDLLRQERGLSLKIAAGRAEGSEAALLAEVYTKLEEIEADKAPARASVILAGLGFTPKMQQQPTREFSGGWRMRLALARALFARPDLLLLDEPTNMLDVRAILWLENYLQTWPSTILVVSHDRNFLNAIATDIIHLHSQRLDGYRGDFETFIKSKQERLLNQQREYEAQQQYRQHIQVFIDRFRYNANRASQVQSKLKMLEKLPELKPVDKESEVVLKFPDGFEKFSPPILQLDEVDFYYDPKHIIFSRLSVSADLESRICVVGENGAGKSTMLKLLMGDLAPVRGIRHAHRNLKIGYFSQHHVEQLDLNVSAVELLARKFPGRPEEEYRHQLGRYGISGELAMRPVASLSGGQKSRVAFAQMTMPCPNFYILDEPTNHLDMETIEALGHALNNFRGGVVLVSHDERFIRLVCKELWVCEKGSVTRVEGGFDQYRALLQEQFRREGFL.

Alanine 2 bears the N-acetylalanine mark. The segment covering 129–143 has biased composition (basic and acidic residues); that stretch reads RLKAKQEKRSEKETL. Positions 129–171 are disordered; it reads RLKAKQEKRSEKETLKTSSPLVLEEASASQAGSRKESRLESSG. Phosphoserine occurs at positions 155, 157, and 161. The span at 161 to 171 shows a compositional bias: basic and acidic residues; the sequence is SRKESRLESSG. 2 consecutive ABC transporter domains span residues 178-424 and 492-707; these read VRIE…LNQQ and LQLD…RREG. 210–217 is an ATP binding site; that stretch reads GRNGLGKT. Serine 283 bears the Phosphoserine mark. 525–532 contacts ATP; that stretch reads GENGAGKS.

The protein belongs to the ABC transporter superfamily. ABCF family. EF3 subfamily.

Its function is as follows. Displays an antiviral effect against flaviviruses such as west Nile virus (WNV) in the presence of OAS1B. The polypeptide is ATP-binding cassette sub-family F member 3 (Abcf3) (Rattus norvegicus (Rat)).